The chain runs to 80 residues: D-alanyl carrier protein 1 (80 aa).

Residues 1–80 form the Carrier domain; sequence MTMDDTKATV…KIVAKVENLQ (80 aa). Serine 38 carries the post-translational modification O-(pantetheine 4'-phosphoryl)serine.

This sequence belongs to the DltC family. 4'-phosphopantetheine is transferred from CoA to a specific serine of apo-DCP.

It is found in the cytoplasm. The protein operates within cell wall biogenesis; lipoteichoic acid biosynthesis. In terms of biological role, carrier protein involved in the D-alanylation of lipoteichoic acid (LTA). The loading of thioester-linked D-alanine onto DltC is catalyzed by D-alanine--D-alanyl carrier protein ligase DltA. The DltC-carried D-alanyl group is further transferred to cell membrane phosphatidylglycerol (PG) by forming an ester bond, probably catalyzed by DltD. D-alanylation of LTA plays an important role in modulating the properties of the cell wall in Gram-positive bacteria, influencing the net charge of the cell wall. The protein is D-alanyl carrier protein 1 of Lactiplantibacillus plantarum (strain ATCC BAA-793 / NCIMB 8826 / WCFS1) (Lactobacillus plantarum).